Consider the following 119-residue polypeptide: Neuropeptide B (119 aa).

The N-terminal stretch at 1-21 (MVRCRTLVAAALALLLTPALA) is a signal peptide. The propeptide occupies 53-119 (SESPALRVGT…SLHKAECQSA (67 aa)).

Belongs to the neuropeptide B/W family. As to expression, detected in a variety of tissues. High levels are found in the lymphoid organs, central nervous system, mammary gland and uterus.

It is found in the secreted. Its function is as follows. May be involved in the regulation of feeding, neuroendocrine system, memory and learning. May be involved in the afferent pain pathway. The protein is Neuropeptide B (Npb) of Rattus norvegicus (Rat).